The chain runs to 90 residues: Barrier-to-autointegration factor A (90 aa).

It belongs to the BAF family. In terms of assembly, homodimer. Interacts with nemp1a and nemp1b. In terms of processing, phosphorylated during S and M phases.

The protein resides in the nucleus. It is found in the chromosome. It localises to the nucleus envelope. Its subcellular location is the cytoplasm. Its function is as follows. Non-specific DNA-binding protein that plays key roles in mitotic nuclear reassembly, chromatin organization, DNA damage response, gene expression and intrinsic immunity against foreign DNA. Contains two non-specific double-stranded DNA (dsDNA)-binding sites which promote DNA cross-bridging. Plays a key role in nuclear membrane reformation at the end of mitosis by driving formation of a single nucleus in a spindle-independent manner. Transiently cross-bridges anaphase chromosomes via its ability to bridge distant DNA sites, leading to the formation of a dense chromatin network at the chromosome ensemble surface that limits membranes to the surface. Also acts as a negative regulator of innate immune activation by restricting CGAS activity toward self-DNA upon acute loss of nuclear membrane integrity. Outcompetes CGAS for DNA-binding, thereby preventing CGAS activation and subsequent damaging autoinflammatory responses. Also involved in DNA damage response; acts by inhibiting the ADP-ribosyltransferase activity of PARP1. Involved in the recognition of exogenous dsDNA in the cytosol: associates with exogenous dsDNA immediately after its appearance in the cytosol at endosome breakdown and is required to avoid autophagy. This Xenopus laevis (African clawed frog) protein is Barrier-to-autointegration factor A (banf1-a).